A 152-amino-acid chain; its full sequence is Nucleoside diphosphate kinase (152 aa).

The ATP site is built by K11, F59, R87, T93, R104, and N114. H117 (pros-phosphohistidine intermediate) is an active-site residue.

The protein belongs to the NDK family. Homotetramer. The cofactor is Mg(2+).

Its subcellular location is the cytoplasm. The catalysed reaction is a 2'-deoxyribonucleoside 5'-diphosphate + ATP = a 2'-deoxyribonucleoside 5'-triphosphate + ADP. It carries out the reaction a ribonucleoside 5'-diphosphate + ATP = a ribonucleoside 5'-triphosphate + ADP. Its function is as follows. Major role in the synthesis of nucleoside triphosphates other than ATP. The ATP gamma phosphate is transferred to the NDP beta phosphate via a ping-pong mechanism, using a phosphorylated active-site intermediate. This is Nucleoside diphosphate kinase from Prochlorococcus marinus (strain MIT 9313).